We begin with the raw amino-acid sequence, 802 residues long: DNA mismatch repair protein MutS (802 aa).

Position 617–624 (617–624 (GPNMGGKS)) interacts with ATP.

This sequence belongs to the DNA mismatch repair MutS family.

Functionally, this protein is involved in the repair of mismatches in DNA. It is possible that it carries out the mismatch recognition step. This protein has a weak ATPase activity. The chain is DNA mismatch repair protein MutS from Buchnera aphidicola subsp. Acyrthosiphon pisum (strain Tuc7).